Here is a 1086-residue protein sequence, read N- to C-terminus: Endo-1,4-beta-xylanase C (1086 aa).

Residues 1–31 form the signal peptide; sequence MRGKWLRLCLAAVLIVSLLPGLGAGEWKASA. 2 CBM-cenC domains span residues 35–183 and 197–359; these read GDIL…IRLV and GQAL…ITAT. Residues 365-710 enclose the GH10 domain; the sequence is EKNIPDLAKK…KPAYWALVDP (346 aa). The active-site Proton donor is Glu502. Residue Asp556 is part of the active site. The active-site Nucleophile is the Glu620.

This sequence belongs to the glycosyl hydrolase 10 (cellulase F) family.

The catalysed reaction is Endohydrolysis of (1-&gt;4)-beta-D-xylosidic linkages in xylans.. The protein operates within glycan degradation; xylan degradation. Functionally, endoxylanase with high hydrolytic activity on birchwood and oat spelt xylan. Xylotetraose, xylotriose, xylobiose and xylose are the main products from birchwood xylan hydrolysis. Shows increasing activity on xylo-oligosaccharides of increasing length. Displays very low hydrolytic activity on Avicel, carboxymethylcellulose (CMC) and p-nitrophenyl-beta-xylopyranoside. Also shows transxylosidase activity, allowing the formation of xylo-oligosaccharides of higher degree of polymerization than the starting substrate. This Paenibacillus barcinonensis protein is Endo-1,4-beta-xylanase C (xynC).